Consider the following 146-residue polypeptide: Cyanate hydratase (146 aa).

Active-site residues include arginine 87, glutamate 90, and serine 113.

The protein belongs to the cyanase family.

It catalyses the reaction cyanate + hydrogencarbonate + 3 H(+) = NH4(+) + 2 CO2. Catalyzes the reaction of cyanate with bicarbonate to produce ammonia and carbon dioxide. This chain is Cyanate hydratase, found in Teredinibacter turnerae (strain ATCC 39867 / T7901).